Here is a 601-residue protein sequence, read N- to C-terminus: Elongation factor 4 (601 aa).

The tr-type G domain occupies 7–189; sequence SHIRNFSIIA…SIVQLVPPPQ (183 aa). GTP-binding positions include 19–24 and 136–139; these read DHGKST and NKID.

It belongs to the TRAFAC class translation factor GTPase superfamily. Classic translation factor GTPase family. LepA subfamily.

It localises to the cell inner membrane. The catalysed reaction is GTP + H2O = GDP + phosphate + H(+). Required for accurate and efficient protein synthesis under certain stress conditions. May act as a fidelity factor of the translation reaction, by catalyzing a one-codon backward translocation of tRNAs on improperly translocated ribosomes. Back-translocation proceeds from a post-translocation (POST) complex to a pre-translocation (PRE) complex, thus giving elongation factor G a second chance to translocate the tRNAs correctly. Binds to ribosomes in a GTP-dependent manner. The protein is Elongation factor 4 of Trichodesmium erythraeum (strain IMS101).